The chain runs to 151 residues: Large ribosomal subunit protein uL15 (151 aa).

Residues 1–51 (MKSLRLEDAVPQSGSRHRKLRVGRGHSAGQGKTSGRGMRGQKCRSGGGVRP) form a disordered region. Over residues 15 to 24 (SRHRKLRVGR) the composition is skewed to basic residues. Residues 26 to 38 (HSAGQGKTSGRGM) are compositionally biased toward gly residues.

Belongs to the universal ribosomal protein uL15 family. In terms of assembly, part of the 50S ribosomal subunit.

Binds to the 23S rRNA. The protein is Large ribosomal subunit protein uL15 of Gloeobacter violaceus (strain ATCC 29082 / PCC 7421).